We begin with the raw amino-acid sequence, 382 residues long: Pyrimidine monooxygenase RutA (382 aa).

Residues 68 to 69, Asn-134, Glu-143, 159 to 160, and Ser-209 each bind FMN; these read IK and RY.

It belongs to the NtaA/SnaA/DszA monooxygenase family. RutA subfamily.

It carries out the reaction uracil + FMNH2 + NADH + O2 = (Z)-3-ureidoacrylate + FMN + NAD(+) + H2O + H(+). It catalyses the reaction thymine + FMNH2 + NADH + O2 = (Z)-2-methylureidoacrylate + FMN + NAD(+) + H2O + H(+). Functionally, catalyzes the pyrimidine ring opening between N-3 and C-4 by an unusual flavin hydroperoxide-catalyzed mechanism, adding oxygen atoms in the process to yield ureidoacrylate peracid, that immediately reacts with FMN forming ureidoacrylate and FMN-N(5)-oxide. The FMN-N(5)-oxide reacts spontaneously with NADH to produce FMN. Requires the flavin reductase RutF to regenerate FMN in vivo. In Escherichia coli (strain SE11), this protein is Pyrimidine monooxygenase RutA.